We begin with the raw amino-acid sequence, 2793 residues long: MTRASASGSGHEASTVFLFGPHVGTFTKASMDKLVRPLSQSPQRDWILRTIADLPTYWDALAAKMPDIARDIDGPTSLSELDRWLRHSLDTAGLSVSDDESLPSILVGPLVVLIQLTQYWRHLEMIRDGSAPAVDLQAELVQQTQSGSRPTVILGFCAGLLAALSVASARNQAGFEEYGAVAVRLAMLIGALIDAQEVWDKASGKGSSASYAVAWRGQKQEDEMNRIIGDLSNDAYVAVRYDQARATVTASETIAPLLMKRLRAAGVTVAEVGIKGQIHSPNADRKQHTNALVELCASLPGLQYAEVSKLALQTYDNQGSGIPVSGSGNMTEMVVRSILVQQCRWFDTFSAVADALPDPYVVTFGLERCVPPTLMRTLGGRQVFYEDLPKDPEKPSFWLTPQSSPPPQPQLQPVLQLQQQQTTRVEPVMPVSPQSEPIAIVGMSVKTAGADDLDEFVAMLKTGQSQHIPITRDRLMHDMLFRENADADPKRKFYGCFFRDGDAFDHKFFKRSPRESAAMDPQSRIVLQAAYQAVEQSGYFVEDHNGYTPDGRDKMHVGVYLGSCGVDYEHNISCYDPNAFTATGALKSFITGRVSHHFGWTGPCMTFDTACSSSAVAIHTACRNLLSGECTAALAGGSNTVTNMNWFQNLAAGSFVSPTGQCKPFDDDADGYCRAEGAAFVYLKRLSDALRDGNQVIATIAASAVYQNENCTPLFVPNSPSLSHLFKDVMRQAKVTANDVSLVEAHGTGTPVGDPAEYESILAALGGPSRKKKLPIGSVKGHIGHTEGASGAIALVKIIMMMREGFIPPQASFKTMNKKIPVKADDNIEVVTRLRAWEEERKTALLNNYGACGSNASMIVTQPDLRGPHSRSHAVAGARYPFWIPGLDTRAITAYCAKLGPWLRSRAEEPTLADISFNLSRQSNRGLPQGFIFNARSLAELHEKIEQAVAAAPSSKDAAASVGIAPVKAERPVILCFGGQISRFVGLDRGLFDAVALFRKHLDAVDTVVKAQGLVSIYAAPDIFSREPIEDTVKLQTMLFAMQYACAQTWIDCGLNGKVQALVGHSFGEITALCVAGTLSLDETVRLVAARAKLVRDSWGADRGAMMALEGDEGLVHQLLSEANGASGSDGSASIACYNGPRSFTIAGSTSAVDQVQQTISRPEFGSIKGKRLNVTNAFHSSLVDKISDGLDSIGKTLTFNSPLIPVERATEVASARATDASFVSQHMRQPVFFNHAVQRLAKRHPQAIFLEAGSSSTITVMAGRAIAQGQASSESHYFQAVSITNETALDSLADTTTALWKQGLRVTFWAHDAVQTAEYAHLLLPPYQFDTSSRHWLPMKSPVEKVKEAALALIAANGGSLAGAGLQGQQAGTPQDPRTLPVWEFVGYQDDETRQARFRVNTSADKYNRYVLSHVIAQTAPICPGTLECDIVIEALFSLEPGWRQDGVQPVVREMINHSPICKDPSRVVYLDLTATNKRRTNWTVRIFSLDDDATKKTPEIHAEATVEMRSSSDQAHVREFANFERLVSHKQCTDLLRLSLDQDTDEGVEVLQGRNVYRAFSSIVDYGEVYRGVKYVVGKGTECAGRVQLPRSSRGDTWLDVPLSDSFSQVGGVWVNLMTDLPSSDMFIATGCELSMRSPRAPPREDADVWHVYARHSRQGDKAIMTDLFVFDAVSGQLVEIMLGVQYMRVAKASMSMMLARMTKDDSVLRTKALVPGPTPAAAFQAALKTAPEVRASSEPGAKVKASKTSKKEKKEKKPVTKAKSKSSKPSGWRDITEEVRNLVATVSGIDASELELDAEMADFGIDSLMGMELGKEVEAAFKCTLDQNEQMEATSLRKFVQCVSNALFGPNAGPAEAEDDEDEEKSDNSSSESASESDDAGSESSDTGILTPTGEEEQPLPLKAVAIHKSAGLAAIAPPVESRLALSSSDILASFGQVKMQTDTLMKEYGVDKTEGVMLSGSNRLCTALVVEAMDELGCPLRTASPGQPLARVAFLPQHGRLMQWVYEFLERDARLINIDPASGQITRTHITAPRKTSQVILQEVLASDPGFAVPNRLAYYAGQQLAGVLSGSTDGIRVLFGSPEGRELTAAMYCEHTFNCMSYAQMREVTNLLAERIGRTGETLKVLEMGAGTGGTTLIMAPFLATLAESGALPIEYTFTDISPSMVANARRRFSKQYPFMRFAVHDIEKPPADELRNQHLVLASNAIHATHNLGVSLSNIHQALRPDGFLMMLEMTEVVPFVDLVFGLLEGWWLFDDGRHHAVVPAEHWESELHRAGFGHVDWTDGNLPENTFQKVIIALASGAQGARLPKPGPVQTLIPELNRENVEARTATAESLVAKYTAGWETPKLRALASRAEKESGKTQAPHAAPGRRAHEAVVIVTGATGSLGSHIVQRLAETPSVATVVCLNRRSSSTTPEKRQQAALTARGITLSPGARAKLRVLETDTSKPQLGLPPLEYGWLLENATDIIHNAWPMSGTRPVSAFEPQLQAMRNLLDLARDIAERPFNGSSRVGFQFISSIGVVGFCGQSRVSEDRVPLSAALPSGYGEAKWICERMVDETLHRHPGLFRAMVVRPGQISGSSTSGFWNPVEHFAFLVKSSQSLRAWPDLQGQMQWIPVDYCAAGVVDLLHLTSRGDEAYPVYHMDNPVGQNWQAMNHVLASALDIPASNIIPFKTWISRVRRSPLPMETENPAARLVDFLDDHFERMSCGGLVLDTSKAKEHSTTMAGVGPVGTELARLQYQARSSLLISLEKLQCVYHSVANYSVLVTMGLRRRSSIATPYTPQI.

Positions 1-401 are N-terminal acylcarrier protein transacylase domain (SAT); the sequence is MTRASASGSG…PEKPSFWLTP (401 aa). The active-site Nucleophile; for transacylase activity is the Cys-157. His-279 functions as the Proton donor/acceptor; for transacylase activity in the catalytic mechanism. Residues 435–862 enclose the Ketosynthase family 3 (KS3) domain; the sequence is SEPIAIVGMS…GSNASMIVTQ (428 aa). Residues Cys-611, His-746, and His-785 each act as for beta-ketoacyl synthase activity in the active site. A malonyl-CoA:ACP transacylase (MAT) region spans residues 977–1265; sequence FGGQISRFVG…SSTITVMAGR (289 aa). The tract at residues 1384–1515 is N-terminal hotdog fold; sequence WEFVGYQDDE…ATVEMRSSSD (132 aa). Residues 1384–1698 form the PKS/mFAS DH domain; it reads WEFVGYQDDE…YMRVAKASMS (315 aa). Residues 1411–1696 are product template (PT) domain; sequence YVLSHVIAQT…VQYMRVAKAS (286 aa). The active-site Proton acceptor; for dehydratase activity is the His-1415. The segment at 1550–1698 is C-terminal hotdog fold; it reads VEVLQGRNVY…YMRVAKASMS (149 aa). The active-site Proton donor; for dehydratase activity is the Asp-1607. The interval 1734–1776 is disordered; sequence PEVRASSEPGAKVKASKTSKKEKKEKKPVTKAKSKSSKPSGWR. Residues 1747–1769 show a composition bias toward basic residues; the sequence is KASKTSKKEKKEKKPVTKAKSKS. In terms of domain architecture, Carrier spans 1776 to 1850; the sequence is RDITEEVRNL…KFVQCVSNAL (75 aa). O-(pantetheine 4'-phosphoryl)serine is present on Ser-1810. A disordered region spans residues 1853–1903; the sequence is PNAGPAEAEDDEDEEKSDNSSSESASESDDAGSESSDTGILTPTGEEEQPL. The segment covering 1859-1868 has biased composition (acidic residues); it reads EAEDDEDEEK. The interval 2115 to 2294 is methyltransferase domain; it reads NLLAERIGRT…HVDWTDGNLP (180 aa). Residues 2360–2379 form a disordered region; the sequence is SRAEKESGKTQAPHAAPGRR. Residues 2387-2630 are NADPH-binding domain; it reads VTGATGSLGS…QWIPVDYCAA (244 aa).

Requires pantetheine 4'-phosphate as cofactor.

The catalysed reaction is (3E,5E,7S)-5,7-dimethyl-2-oxonona-3,5-dienyl-[ACP] + 4 malonyl-CoA + AH2 + S-adenosyl-L-methionine + 3 H(+) = 6-[(3E,5E,7S)-5,7-dimethyl-2-oxonona-3,5-dienyl]-2,4-dihydroxy-3-methylbenzaldehyde + holo-[ACP] + A + S-adenosyl-L-homocysteine + 4 CO2 + 4 CoA + H2O. It functions in the pathway secondary metabolite biosynthesis. Functionally, iterative polyketide synthase; part of the gene cluster that mediates the biosynthesis of asperfuranone, a probable antitumor agent. The polyketide synthase afoG is responsible for producing the 3,5-dimethyloctadienone moiety from acetyl-CoA, three malonyl-CoA, and two S-adenosyl methionines (SAM). The 3,5-dimethyloctadienone moiety is then loaded onto the SAT domain of afoE and extended with four malonyl-CoA and one SAM, which leads to the formation of 2,4-dihydroxy-6-(5,7-dimethyl-2-oxo-trans-3-trans-5-nonadienyl)-3-methylbenzaldehyde (compound 2) after reductive release and aldol condensation. AfoD is the next enzyme in the biosynthesis sequence and hydroxylates the side chain at the benzylic position of compound 2. After benzylic hydroxylation, a furan ring is formed after five-member ring hemiacetal formation and water elimination. AfoF and afoC are proposed to oxidize the R-diketone proton and to reduce the unconjugated carbonyl group, respectively, to generate asperfuranone. Since no intermediates could be isolated from afoF and afoC deletants, the sequence of these two enzymes is not fully understood. Moreover, since afoC deletant still produces a small amount of asperfuranone, other endogenous oxidoreductases might catalyze the same reaction with much less efficiency. In Emericella nidulans (strain FGSC A4 / ATCC 38163 / CBS 112.46 / NRRL 194 / M139) (Aspergillus nidulans), this protein is Iterative polyketide synthase afoE.